Here is a 552-residue protein sequence, read N- to C-terminus: Serine protease 53 (552 aa).

A signal peptide spans 1–23; that stretch reads MRQSWRPELLIVGAVVVIEGLQA. 2 Peptidase S1 domains span residues 24 to 273 and 294 to 525; these read AQRA…AHVH and VACG…NLDW. The tract at residues 27–46 is disordered; sequence ACGQRGPGPPEPQEGNTLPG. A disulfide bridge links Cys62 with Cys78. Residues His77 and Asp128 each act as charge relay system in the active site. 4 cysteine pairs are disulfide-bonded: Cys158-Cys230, Cys187-Cys209, Cys220-Cys249, and Cys326-Cys342. Residues Ser224, His341, and Asp382 each act as charge relay system in the active site. 2 disulfide bridges follow: Cys443-Cys463 and Cys473-Cys501. The active-site Charge relay system is the Ser477.

This sequence belongs to the peptidase S1 family.

The protein localises to the secreted. In vitro can degrade the fibrinogen alpha chain of as well as pro-urokinase-type plasminogen activator. This chain is Serine protease 53 (Prss53), found in Mus musculus (Mouse).